We begin with the raw amino-acid sequence, 253 residues long: Methionine aminopeptidase (253 aa).

Position 78 (His-78) interacts with substrate. A divalent metal cation-binding residues include Asp-95, Asp-106, and His-169. A substrate-binding site is contributed by His-176. A divalent metal cation contacts are provided by Glu-206 and Glu-237.

It belongs to the peptidase M24A family. Methionine aminopeptidase type 1 subfamily. Monomer. Co(2+) serves as cofactor. It depends on Zn(2+) as a cofactor. The cofactor is Mn(2+). Requires Fe(2+) as cofactor.

The catalysed reaction is Release of N-terminal amino acids, preferentially methionine, from peptides and arylamides.. In terms of biological role, removes the N-terminal methionine from nascent proteins. The N-terminal methionine is often cleaved when the second residue in the primary sequence is small and uncharged (Met-Ala-, Cys, Gly, Pro, Ser, Thr, or Val). Requires deformylation of the N(alpha)-formylated initiator methionine before it can be hydrolyzed. The polypeptide is Methionine aminopeptidase (Helicobacter pylori (strain J99 / ATCC 700824) (Campylobacter pylori J99)).